A 459-amino-acid polypeptide reads, in one-letter code: NADH-ubiquinone oxidoreductase chain 4 (459 aa).

A run of 13 helical transmembrane segments spans residues 22–42 (HLSY…LQWL), 61–81 (PIST…ILVS), 94–113 (RTFT…AFSA), 114–134 (LEMM…LIII), 146–166 (AGTY…IALT), 197–217 (WFAL…HLWL), 225–245 (PIAG…YGII), 258–278 (LSYP…LICL), 285–304 (SLIA…AALL), 308–330 (LSIT…LFCL), 352–372 (LLPL…ALPP), 380–400 (LTII…TGLG), and 437–457 (LIMM…QLMT).

It belongs to the complex I subunit 4 family.

It is found in the mitochondrion membrane. The catalysed reaction is a ubiquinone + NADH + 5 H(+)(in) = a ubiquinol + NAD(+) + 4 H(+)(out). In terms of biological role, core subunit of the mitochondrial membrane respiratory chain NADH dehydrogenase (Complex I) that is believed to belong to the minimal assembly required for catalysis. Complex I functions in the transfer of electrons from NADH to the respiratory chain. The immediate electron acceptor for the enzyme is believed to be ubiquinone. This Pelomedusa subrufa (African side-necked turtle) protein is NADH-ubiquinone oxidoreductase chain 4 (MT-ND4).